The following is a 22-amino-acid chain: Caerin-3.1 (22 aa).

At lysine 22 the chain carries Lysine amide.

Belongs to the frog skin active peptide (FSAP) family. Caerin subfamily. Expressed by the skin dorsal glands.

The protein resides in the secreted. In terms of biological role, antibacterial peptide with narrow spectrum of activity. Inhibits the formation of NO by neuronal nitric oxide synthase. The protein is Caerin-3.1 of Litoria rothii (Roth's tree frog).